The sequence spans 455 residues: MNKFFLIGIGGISMSAIALILKNHGHIVEGSDMQESITTRMLREKGINVYIGHDENHIKGDEIVIFTAAIPKDNPELVKAKRLGLKVYERAEFLGMLMKDYKNVIAVSGTHGKTTTTSMIGYILKKALLNPTVLVGAFVKQLGGNFCIGSSEYLVVEACEYVDSFLNFNPSIGVILNIDNDHLDYFKDIESIKDSFRKFALKIPQNGFIVANLDDENVYSVASYLKQNVIYFSTKTKADFWADNITSCNGYYEFDVVNKDFKHLCHIKLNIPGFHNVYNSLAAFSVAYTLGIDKNTIKEAIFEFCGASRRLEKLGKIDGIVLYDDYAHHPTEIEATLRTLKKLAKEKVIVIFQPHTFSRLKSLMEGFVKSLSLADKVIVTDVYAAREKNVYGVSSKDLYEKLKKAGVDCEYIDQFEKIAEYVLNTAQKGDIVATIGAGDVNKCIELILDKSPVKS.

An ATP-binding site is contributed by 109-115 (GTHGKTT).

This sequence belongs to the MurCDEF family.

It localises to the cytoplasm. The catalysed reaction is UDP-N-acetyl-alpha-D-muramate + L-alanine + ATP = UDP-N-acetyl-alpha-D-muramoyl-L-alanine + ADP + phosphate + H(+). Its pathway is cell wall biogenesis; peptidoglycan biosynthesis. Its function is as follows. Cell wall formation. This chain is UDP-N-acetylmuramate--L-alanine ligase, found in Caldicellulosiruptor saccharolyticus (strain ATCC 43494 / DSM 8903 / Tp8T 6331).